The sequence spans 426 residues: MCDRNGGRRLRQWLIEQIDSSMYPGLIWENEEKSMFRIPWKHAGKQDYNQEVDASIFKAWAVFKGKFKEGDKAEPATWKTRLRCALNKSPDFEEVTDRSQLDISEPYKVYRIVPEEEQKCKLGVATAGCVNEVTEMECGRSEIDELIKEPSVDDYMGMIKRSPSPPEACRSQLLPDWWAQQPSTGVPLVTGYTTYDAHHSAFSQMVISFYYGGKLVGQATTTCPEGCRLSLSQPGLPGTKLYGPEGLELVRFPPADAIPSERQRQVTRKLFGHLERGVLLHSSRQGVFVKRLCQGRVFCSGNAVVCKGRPNKLERDEVVQVFDTSQFFRELQQFYNSQGRLPDGRVVLCFGEEFPDMAPLRSKLILVQIEQLYVRQLAEEAGKSCGAGSVMQAPEEPPPDQVFRMFPDICASHQRSFFRENQQITV.

The IRF tryptophan pentad repeat DNA-binding region spans 7 to 114; that stretch reads GRRLRQWLIE…EPYKVYRIVP (108 aa).

Belongs to the IRF family. In terms of assembly, interacts (via C-terminus) with TRIM21 (via C-terminus). Interacts with the BATF-JUNB heterodimer. Interacts with BATF (via bZIP domain); the interaction is direct. Interacts with COPS2. Interacts with SPI1. Post-translationally, ubiquitinated. Ubiquitination by TRIM21 in macrophages, a process that is strongly increased upon interferon gamma stimulation, leds to the enhanced transcriptional activity of target cytokine genes. Ubiquitination leads to its degradation by the proteasome. Sumoylated with SUMO3. Desumoylated by SENP1. In terms of tissue distribution, predominantly expressed in lymphoid tissues.

Its subcellular location is the nucleus. The protein resides in the cytoplasm. In terms of biological role, transcription factor that specifically binds to the upstream regulatory region of type I interferon (IFN) and IFN-inducible MHC class I genes (the interferon consensus sequence (ICS)). Can both act as a transcriptional activator or repressor. Plays a negative regulatory role in cells of the immune system. Involved in CD8(+) dendritic cell differentiation by forming a complex with the BATF-JUNB heterodimer in immune cells, leading to recognition of AICE sequence (5'-TGAnTCA/GAAA-3'), an immune-specific regulatory element, followed by cooperative binding of BATF and IRF8 and activation of genes. Required for the development of plasmacytoid dendritic cells (pDCs), which produce most of the type I IFN in response to viral infection. Positively regulates macroautophagy in dendritic cells. Acts as a transcriptional repressor of osteoclast differentiation factors such as NFATC1 and EEIG1. This chain is Interferon regulatory factor 8, found in Homo sapiens (Human).